Reading from the N-terminus, the 541-residue chain is Formimidoyltransferase-cyclodeaminase (541 aa).

A formiminotransferase N-subdomain region spans residues 1 to 181 (MSQLVECVPN…GATVTGARKF (181 aa)). Histidine 82 serves as the catalytic For formimidoyltransferase activity. Position 163 to 172 (163 to 172 (GPSSFVPSWG)) interacts with folate. The segment at 182–326 (LIAFNINLLS…PKERIIEYLV (145 aa)) is formiminotransferase C-subdomain. The interval 327-334 (PDSGPEQS) is linker. Positions 335–541 (LLDASLRAFV…VLGSLEARKE (207 aa)) are cyclodeaminase/cyclohydrolase. Aspartate 412 serves as the catalytic For cyclodeaminase activity. Phosphoserine is present on serine 520.

This sequence in the C-terminal section; belongs to the cyclodeaminase/cyclohydrolase family. It in the N-terminal section; belongs to the formiminotransferase family. As to quaternary structure, homooctamer, including four polyglutamate binding sites. The subunits are arranged as a tetramer of dimers, and form a planar ring-shaped structure. In terms of tissue distribution, specifically expressed in liver (at protein level).

Its subcellular location is the cytoplasm. It localises to the cytosol. The protein resides in the golgi apparatus. It is found in the cytoskeleton. The protein localises to the microtubule organizing center. Its subcellular location is the centrosome. It localises to the centriole. The enzyme catalyses 5-formimidoyltetrahydrofolate + L-glutamate = N-formimidoyl-L-glutamate + (6S)-5,6,7,8-tetrahydrofolate. The catalysed reaction is 5-formimidoyltetrahydrofolate + 2 H(+) = (6R)-5,10-methenyltetrahydrofolate + NH4(+). The protein operates within amino-acid degradation; L-histidine degradation into L-glutamate; L-glutamate from N-formimidoyl-L-glutamate (transferase route): step 1/1. Folate-dependent enzyme, that displays both transferase and deaminase activity. Serves to channel one-carbon units from formiminoglutamate to the folate pool. Functionally, binds and promotes bundling of vimentin filaments originating from the Golgi. This is Formimidoyltransferase-cyclodeaminase (Ftcd) from Rattus norvegicus (Rat).